Here is a 306-residue protein sequence, read N- to C-terminus: UDP-3-O-acyl-N-acetylglucosamine deacetylase (306 aa).

3 residues coordinate Zn(2+): His79, His238, and Asp242. Residue His265 is the Proton donor of the active site.

Belongs to the LpxC family. It depends on Zn(2+) as a cofactor.

The catalysed reaction is a UDP-3-O-[(3R)-3-hydroxyacyl]-N-acetyl-alpha-D-glucosamine + H2O = a UDP-3-O-[(3R)-3-hydroxyacyl]-alpha-D-glucosamine + acetate. It participates in glycolipid biosynthesis; lipid IV(A) biosynthesis; lipid IV(A) from (3R)-3-hydroxytetradecanoyl-[acyl-carrier-protein] and UDP-N-acetyl-alpha-D-glucosamine: step 2/6. Functionally, catalyzes the hydrolysis of UDP-3-O-myristoyl-N-acetylglucosamine to form UDP-3-O-myristoylglucosamine and acetate, the committed step in lipid A biosynthesis. This Idiomarina loihiensis (strain ATCC BAA-735 / DSM 15497 / L2-TR) protein is UDP-3-O-acyl-N-acetylglucosamine deacetylase.